We begin with the raw amino-acid sequence, 417 residues long: Serine--tRNA ligase (417 aa).

L-serine is bound at residue 226-228 (TSE). ATP is bound by residues 257–259 (RRE) and valine 273. Glutamate 280 provides a ligand contact to L-serine. 344-347 (EVTS) lines the ATP pocket. Residue threonine 379 participates in L-serine binding.

The protein belongs to the class-II aminoacyl-tRNA synthetase family. Type-1 seryl-tRNA synthetase subfamily. As to quaternary structure, homodimer. The tRNA molecule binds across the dimer.

The protein resides in the cytoplasm. It carries out the reaction tRNA(Ser) + L-serine + ATP = L-seryl-tRNA(Ser) + AMP + diphosphate + H(+). The enzyme catalyses tRNA(Sec) + L-serine + ATP = L-seryl-tRNA(Sec) + AMP + diphosphate + H(+). The protein operates within aminoacyl-tRNA biosynthesis; selenocysteinyl-tRNA(Sec) biosynthesis; L-seryl-tRNA(Sec) from L-serine and tRNA(Sec): step 1/1. Its function is as follows. Catalyzes the attachment of serine to tRNA(Ser). Is also able to aminoacylate tRNA(Sec) with serine, to form the misacylated tRNA L-seryl-tRNA(Sec), which will be further converted into selenocysteinyl-tRNA(Sec). This Tropheryma whipplei (strain Twist) (Whipple's bacillus) protein is Serine--tRNA ligase.